Reading from the N-terminus, the 142-residue chain is ATP synthase epsilon chain (142 aa).

It belongs to the ATPase epsilon chain family. As to quaternary structure, F-type ATPases have 2 components, CF(1) - the catalytic core - and CF(0) - the membrane proton channel. CF(1) has five subunits: alpha(3), beta(3), gamma(1), delta(1), epsilon(1). CF(0) has three main subunits: a, b and c.

It localises to the cell inner membrane. In terms of biological role, produces ATP from ADP in the presence of a proton gradient across the membrane. This Shewanella oneidensis (strain ATCC 700550 / JCM 31522 / CIP 106686 / LMG 19005 / NCIMB 14063 / MR-1) protein is ATP synthase epsilon chain.